The sequence spans 138 residues: Protein E6 (138 aa).

Zinc fingers lie at residues 25–61 and 98–134; these read CNFC…CAAC and CLIC…CRHC.

It belongs to the papillomaviridae E6 protein family. As to quaternary structure, forms homodimers. Interacts with ubiquitin-protein ligase UBE3A/E6-AP; this interaction stimulates UBE3A ubiquitin activity. Interacts with host BAK1.

The protein localises to the host cytoplasm. Its subcellular location is the host nucleus. Its function is as follows. Plays a major role in the induction and maintenance of cellular transformation. E6 associates with host UBE3A/E6-AP ubiquitin-protein ligase and modulates its activity. Protects host keratinocytes from apoptosis by mediating the degradation of host BAK1. May also inhibit host immune response. The protein is Protein E6 of Homo sapiens (Human).